Reading from the N-terminus, the 87-residue chain is Small ribosomal subunit protein bS20 (87 aa).

It belongs to the bacterial ribosomal protein bS20 family.

Its function is as follows. Binds directly to 16S ribosomal RNA. This chain is Small ribosomal subunit protein bS20, found in Brachyspira hyodysenteriae (strain ATCC 49526 / WA1).